The sequence spans 177 residues: Large ribosomal subunit protein uL6 (177 aa).

It belongs to the universal ribosomal protein uL6 family. In terms of assembly, part of the 50S ribosomal subunit.

This protein binds to the 23S rRNA, and is important in its secondary structure. It is located near the subunit interface in the base of the L7/L12 stalk, and near the tRNA binding site of the peptidyltransferase center. This is Large ribosomal subunit protein uL6 from Rhodopseudomonas palustris (strain BisA53).